Reading from the N-terminus, the 43-residue chain is Plasma membrane ATPase proteolipid 2 (43 aa).

A propeptide spanning residues 1 to 5 is cleaved from the precursor; that stretch reads MLMST. The chain crosses the membrane as a helical span at residues 9-29; it reads GVILVFILVGLACIAIISTII. Over 30-43 the chain is Cytoplasmic; it reads YRKWQARQRGLQRF.

As to quaternary structure, monomer and homodimer. Associated with the 100 kDa subunit of the plasma membrane H(+)-ATPase.

It localises to the cell membrane. This is Plasma membrane ATPase proteolipid 2 (PMP2) from Saccharomyces cerevisiae (strain ATCC 204508 / S288c) (Baker's yeast).